Consider the following 28-residue polypeptide: Phospholipase A2 (28 aa).

Gly-28 provides a ligand contact to Ca(2+).

It depends on Ca(2+) as a cofactor. Expressed by the venom gland.

It is found in the secreted. The catalysed reaction is a 1,2-diacyl-sn-glycero-3-phosphocholine + H2O = a 1-acyl-sn-glycero-3-phosphocholine + a fatty acid + H(+). PLA2 catalyzes the calcium-dependent hydrolysis of the 2-acyl groups in 3-sn-phosphoglycerides. This is Phospholipase A2 from Scolopendra dehaani (Thai centipede).